A 185-amino-acid chain; its full sequence is uncharacterized protein (185 aa).

Residues 1–29 form the signal peptide; the sequence is MKLFSRTSLVALGTAAAITLSGVTAPAFA. Residues 41–66 form a disordered region; that stretch reads KTAEDNTPEAPGASTPLKLEQPGTIT.

Glycosylated; by Pmt.

The protein localises to the secreted. This is an uncharacterized protein from Corynebacterium glutamicum (strain ATCC 13032 / DSM 20300 / JCM 1318 / BCRC 11384 / CCUG 27702 / LMG 3730 / NBRC 12168 / NCIMB 10025 / NRRL B-2784 / 534).